A 287-amino-acid chain; its full sequence is Inorganic pyrophosphatase (287 aa).

Position 79 (Arg-79) interacts with diphosphate. Residues Asp-116, Asp-121, and Asp-153 each contribute to the Mg(2+) site.

It belongs to the PPase family. The cofactor is Mg(2+).

The protein localises to the cytoplasm. It catalyses the reaction diphosphate + H2O = 2 phosphate + H(+). The polypeptide is Inorganic pyrophosphatase (IPP1) (Zygosaccharomyces bailii).